A 183-amino-acid chain; its full sequence is Holliday junction branch migration complex subunit RuvA (183 aa).

The tract at residues 1–64 (MIVAIEGIVS…EDSHKLYGFL (64 aa)) is domain I. Residues 65–138 (DTNEQRMFEL…SDAKINIENS (74 aa)) form a domain II region. A region of interest (flexible linker) is located at residue Ser-138. Residues 138 to 183 (SNQDHAQALAALLSLGFKQENILKVLRTCESQNTSELIKEALKKLA) are domain III.

The protein belongs to the RuvA family. As to quaternary structure, homotetramer. Forms an RuvA(8)-RuvB(12)-Holliday junction (HJ) complex. HJ DNA is sandwiched between 2 RuvA tetramers; dsDNA enters through RuvA and exits via RuvB. An RuvB hexamer assembles on each DNA strand where it exits the tetramer. Each RuvB hexamer is contacted by two RuvA subunits (via domain III) on 2 adjacent RuvB subunits; this complex drives branch migration. In the full resolvosome a probable DNA-RuvA(4)-RuvB(12)-RuvC(2) complex forms which resolves the HJ.

Its subcellular location is the cytoplasm. In terms of biological role, the RuvA-RuvB-RuvC complex processes Holliday junction (HJ) DNA during genetic recombination and DNA repair, while the RuvA-RuvB complex plays an important role in the rescue of blocked DNA replication forks via replication fork reversal (RFR). RuvA specifically binds to HJ cruciform DNA, conferring on it an open structure. The RuvB hexamer acts as an ATP-dependent pump, pulling dsDNA into and through the RuvAB complex. HJ branch migration allows RuvC to scan DNA until it finds its consensus sequence, where it cleaves and resolves the cruciform DNA. This chain is Holliday junction branch migration complex subunit RuvA, found in Campylobacter lari (strain RM2100 / D67 / ATCC BAA-1060).